Consider the following 234-residue polypeptide: Small ribosomal subunit protein uS5 (234 aa).

Residues 1–10 (MEDIKTTTPE) show a composition bias toward polar residues. The disordered stretch occupies residues 1 to 69 (MEDIKTTTPE…KDGSGNKPNK (69 aa)). Basic and acidic residues predominate over residues 11–31 (VKNEENKTSEVKEGKALEKNN). The region spanning 78 to 141 (LEEKIVGVKK…KSAKNNMYKV (64 aa)) is the S5 DRBM domain.

The protein belongs to the universal ribosomal protein uS5 family. As to quaternary structure, part of the 30S ribosomal subunit. Contacts proteins S4 and S8.

In terms of biological role, with S4 and S12 plays an important role in translational accuracy. Functionally, located at the back of the 30S subunit body where it stabilizes the conformation of the head with respect to the body. The sequence is that of Small ribosomal subunit protein uS5 from Malacoplasma penetrans (strain HF-2) (Mycoplasma penetrans).